The primary structure comprises 249 residues: ATP synthase subunit a, chloroplastic (249 aa).

5 consecutive transmembrane segments (helical) span residues 40–60 (QVLI…VLAI), 97–117 (VPFI…GALL), 136–156 (INTT…AGLS), 201–221 (LVVV…VMFL), and 222–242 (GLFT…AYIG).

It belongs to the ATPase A chain family. F-type ATPases have 2 components, CF(1) - the catalytic core - and CF(0) - the membrane proton channel. CF(1) has five subunits: alpha(3), beta(3), gamma(1), delta(1), epsilon(1). CF(0) has four main subunits: a, b, b' and c.

The protein resides in the plastid. The protein localises to the chloroplast thylakoid membrane. Key component of the proton channel; it plays a direct role in the translocation of protons across the membrane. The chain is ATP synthase subunit a, chloroplastic from Capsella bursa-pastoris (Shepherd's purse).